We begin with the raw amino-acid sequence, 471 residues long: Glutamate--tRNA ligase (471 aa).

The 'HIGH' region signature appears at 9 to 19 (PSPTGYLHVGG). The Zn(2+) site is built by Cys98, Cys100, Cys125, and His127. The short motif at 237–241 (KLSKR) is the 'KMSKS' region element. Lys240 is an ATP binding site.

It belongs to the class-I aminoacyl-tRNA synthetase family. Glutamate--tRNA ligase type 1 subfamily. Monomer. Requires Zn(2+) as cofactor.

It is found in the cytoplasm. It carries out the reaction tRNA(Glu) + L-glutamate + ATP = L-glutamyl-tRNA(Glu) + AMP + diphosphate. In terms of biological role, catalyzes the attachment of glutamate to tRNA(Glu) in a two-step reaction: glutamate is first activated by ATP to form Glu-AMP and then transferred to the acceptor end of tRNA(Glu). This chain is Glutamate--tRNA ligase, found in Shigella dysenteriae serotype 1 (strain Sd197).